A 986-amino-acid chain; its full sequence is Translation initiation factor IF-2 (986 aa).

Basic and acidic residues predominate over residues 49–59; the sequence is EFAKDNAKGDS. A disordered region spans residues 49–370; sequence EFAKDNAKGD…KNRLAKRHEY (322 aa). Over residues 60–112 the composition is skewed to low complexity; that stretch reads KPASSAQKPAAKPVQQRRPAAPSAPASTSSSAPTPAAPARQASPASAHQQAPT. A compositionally biased stretch (basic and acidic residues) spans 135-168; sequence GQHDNRENGRDNREGRENGRQSRPNDRRNNDRRN. Positions 170–182 are enriched in low complexity; sequence QGRPNNGQPGQHQ. Composition is skewed to gly residues over residues 254-286 and 296-353; these read GRGG…GGPR and GQGG…GRQG. Positions 357–366 are enriched in basic residues; that stretch reads SKARKNRLAK. Residues 479-651 form the tr-type G domain; sequence PRPPVVTVMG…VLLTADAELD (173 aa). A G1 region spans residues 488–495; that stretch reads GHVDHGKT. A GTP-binding site is contributed by 488–495; that stretch reads GHVDHGKT. Residues 513 to 517 form a G2 region; the sequence is GITQR. The tract at residues 538-541 is G3; sequence DTPG. GTP is bound by residues 538–542 and 592–595; these read DTPGH and NKID. Residues 592 to 595 form a G4 region; the sequence is NKID. The interval 628 to 630 is G5; that stretch reads SAK.

The protein belongs to the TRAFAC class translation factor GTPase superfamily. Classic translation factor GTPase family. IF-2 subfamily.

The protein localises to the cytoplasm. One of the essential components for the initiation of protein synthesis. Protects formylmethionyl-tRNA from spontaneous hydrolysis and promotes its binding to the 30S ribosomal subunits. Also involved in the hydrolysis of GTP during the formation of the 70S ribosomal complex. This chain is Translation initiation factor IF-2, found in Bifidobacterium longum subsp. infantis (strain ATCC 15697 / DSM 20088 / JCM 1222 / NCTC 11817 / S12).